The chain runs to 394 residues: Elongation factor Tu (394 aa).

Positions 10-205 (KPHVNIGTIG…VDNWIPLPPR (196 aa)) constitute a tr-type G domain. Residues 19-26 (GHVDHGKT) are G1. 19 to 26 (GHVDHGKT) contributes to the GTP binding site. Thr-26 contributes to the Mg(2+) binding site. The interval 60 to 64 (GITIN) is G2. The segment at 81 to 84 (DCPG) is G3. GTP is bound by residues 81-85 (DCPGH) and 136-139 (NKCD). Residues 136-139 (NKCD) form a G4 region. The tract at residues 174 to 176 (SAL) is G5.

It belongs to the TRAFAC class translation factor GTPase superfamily. Classic translation factor GTPase family. EF-Tu/EF-1A subfamily. In terms of assembly, monomer.

It is found in the cytoplasm. It catalyses the reaction GTP + H2O = GDP + phosphate + H(+). Functionally, GTP hydrolase that promotes the GTP-dependent binding of aminoacyl-tRNA to the A-site of ribosomes during protein biosynthesis. This Bacteroides thetaiotaomicron (strain ATCC 29148 / DSM 2079 / JCM 5827 / CCUG 10774 / NCTC 10582 / VPI-5482 / E50) protein is Elongation factor Tu.